A 65-amino-acid polypeptide reads, in one-letter code: Large ribosomal subunit protein bL35 (65 aa).

This sequence belongs to the bacterial ribosomal protein bL35 family.

This is Large ribosomal subunit protein bL35 from Clostridium acetobutylicum (strain ATCC 824 / DSM 792 / JCM 1419 / IAM 19013 / LMG 5710 / NBRC 13948 / NRRL B-527 / VKM B-1787 / 2291 / W).